A 188-amino-acid polypeptide reads, in one-letter code: MATVSTNEFKGGLKLMLDNEPCVILENEYVKPGKGQAFNRVKIRKLLSGKVLEKTFKSGDTCEVADVMDIDLDYLYSDGEFYHFMNNETFEQIAADAKAVGDNAKWLVENNTCMITLWNGNPITVTPPNFVELEVTDTDPGLKGDTQGTGGKPATLSTGAVVRVPLFIAIGEVIKVDTRTAEYVGRVK.

N6-(3,6-diaminohexanoyl)-5-hydroxylysine is present on K34.

The protein belongs to the elongation factor P family. May be beta-lysylated on the epsilon-amino group of Lys-34 by the combined action of EpmA and EpmB, and then hydroxylated on the C5 position of the same residue by EpmC (if this protein is present). Lysylation is critical for the stimulatory effect of EF-P on peptide-bond formation. The lysylation moiety may extend toward the peptidyltransferase center and stabilize the terminal 3-CCA end of the tRNA. Hydroxylation of the C5 position on Lys-34 may allow additional potential stabilizing hydrogen-bond interactions with the P-tRNA.

Its subcellular location is the cytoplasm. The protein operates within protein biosynthesis; polypeptide chain elongation. Involved in peptide bond synthesis. Alleviates ribosome stalling that occurs when 3 or more consecutive Pro residues or the sequence PPG is present in a protein, possibly by augmenting the peptidyl transferase activity of the ribosome. Modification of Lys-34 is required for alleviation. This chain is Elongation factor P, found in Vibrio campbellii (strain ATCC BAA-1116).